Reading from the N-terminus, the 287-residue chain is Glycine--tRNA ligase alpha subunit (287 aa).

Belongs to the class-II aminoacyl-tRNA synthetase family. Tetramer of two alpha and two beta subunits.

It is found in the cytoplasm. The catalysed reaction is tRNA(Gly) + glycine + ATP = glycyl-tRNA(Gly) + AMP + diphosphate. The protein is Glycine--tRNA ligase alpha subunit of Campylobacter jejuni subsp. doylei (strain ATCC BAA-1458 / RM4099 / 269.97).